We begin with the raw amino-acid sequence, 499 residues long: MGGEDEILSTMEDFAAVYDVLVIGCGPGGFTAAMQASQAGLLTACVDQRASLGGAYLVDGAVPSKTLLYESYLYRLLQQQELIEQRGTRLFPAKFDMQAAQSALKHNIEELGNVYKRELSKNNVTVYKGTAAFKDPHHVEIAQRGMKPFIVEAKYIVVATGSAVIQCPGVAIDNDKIISSDKALSLDYIPSRFTIMGGGTIGLEIACIFNNLGSRVTIVESQSEICQNMDNELASATKTLLQCQGIAFLLDTRVQLAEADAAGQLNITLLNKVSKKTYVHHCDVLMVSIGRRPLLKGLDISSIGLDERDFVENVDVQTQSLLKYPHIKPIGDVTLGPMLALKAEEQAIRAIQSIGCTGSDGTSNCGFPPNVLYCQPQIGWVGYTEEGLAKARIPYQKGRVLFSQNVRYNTLLPREENTTVSPFIKVLIDSRDMKILGVHMINDDANELLSQASMAVSLGLTAHDVCKVPFPHPSLSESFKQAVQLAMANGTSPGVHVRE.

An FAD-binding site is contributed by 47 to 56 (DQRASLGGAY).

This sequence belongs to the class-I pyridine nucleotide-disulfide oxidoreductase family.

The protein localises to the cytoplasm. The polypeptide is Increased recombination centers protein 15 (IRC15) (Saccharomyces cerevisiae (strain ATCC 204508 / S288c) (Baker's yeast)).